The following is a 152-amino-acid chain: UPF0225 protein YchJ (152 aa).

It belongs to the UPF0225 family.

This chain is UPF0225 protein YchJ, found in Escherichia coli O7:K1 (strain IAI39 / ExPEC).